A 65-amino-acid polypeptide reads, in one-letter code: Large ribosomal subunit protein bL35 (65 aa).

It belongs to the bacterial ribosomal protein bL35 family.

The polypeptide is Large ribosomal subunit protein bL35 (Stenotrophomonas maltophilia (strain R551-3)).